We begin with the raw amino-acid sequence, 738 residues long: Eukaryotic translation initiation factor 3 subunit B (738 aa).

A sufficient for interaction with HCR1 and TIF32 region spans residues 1–120 (MCGCVGVISN…LFIQFKTAQM (120 aa)). The tract at residues 1-245 (MCGCVGVISN…GIQSWGGAQF (245 aa)) is sufficient for interaction with PIC8. Residues 59–146 (NFVVVDGAPI…HRLLVNKLSD (88 aa)) form the RRM domain. WD repeat units follow at residues 211-250 (PRKGFTSKYAKFSPKGTYLFSIHPQGIQSWGGAQFESISK), 322-360 (QKEMPWPLVKWSHDDKYCARQGPGALAIYETPSFQLLDK), 363-406 (VKID…QTAR), and 537-579 (VVDK…ENVR).

Belongs to the eIF-3 subunit B family. Component of the eukaryotic translation initiation factor 3 (eIF-3) complex.

The protein resides in the cytoplasm. Its function is as follows. RNA-binding component of the eukaryotic translation initiation factor 3 (eIF-3) complex, which is involved in protein synthesis of a specialized repertoire of mRNAs and, together with other initiation factors, stimulates binding of mRNA and methionyl-tRNAi to the 40S ribosome. The eIF-3 complex specifically targets and initiates translation of a subset of mRNAs involved in cell proliferation. The chain is Eukaryotic translation initiation factor 3 subunit B from Meyerozyma guilliermondii (strain ATCC 6260 / CBS 566 / DSM 6381 / JCM 1539 / NBRC 10279 / NRRL Y-324) (Yeast).